The primary structure comprises 344 residues: MVSASSFYVPAAVKKNFNALVRHVKGVLSVLDECDPKNNVADQVNLLLCAKEMQSEQVAALLSVLLIDTWGYRLFSYNLRKVSVEGLGFAQETARWKGVDIVLGYHHPDLGFLAINPKNPSNASLVEGFRKNELLLVYVGKQDRGPLDERIADEVAKGLIALIENRKFVVPKEILSGVFAFVSTKKSEGSGKRVRSAKKSGADAARASEGATCDRASSESVSPTARPPAQASAGPIRMSQLISVPVSNELFHNGNVEAWKRIIRSYNARYPSSEVIVFYDGERIVDINTLFKWGKVKHGSVIQFAVSGEEIKDLSKLSKYFKEGASSRFEVFLHGSPDTVLNLF.

The tract at residues 190-232 (SGKRVRSAKKSGADAARASEGATCDRASSESVSPTARPPAQAS) is disordered.

This is an uncharacterized protein from Treponema pallidum (strain Nichols).